The chain runs to 207 residues: Ribosomal RNA large subunit methyltransferase E (207 aa).

S-adenosyl-L-methionine-binding residues include Gly56, Trp58, Asp76, Asp94, and Asp116. Lys156 functions as the Proton acceptor in the catalytic mechanism.

Belongs to the class I-like SAM-binding methyltransferase superfamily. RNA methyltransferase RlmE family.

It is found in the cytoplasm. The catalysed reaction is uridine(2552) in 23S rRNA + S-adenosyl-L-methionine = 2'-O-methyluridine(2552) in 23S rRNA + S-adenosyl-L-homocysteine + H(+). In terms of biological role, specifically methylates the uridine in position 2552 of 23S rRNA at the 2'-O position of the ribose in the fully assembled 50S ribosomal subunit. The protein is Ribosomal RNA large subunit methyltransferase E of Desulfatibacillum aliphaticivorans.